We begin with the raw amino-acid sequence, 476 residues long: Cysteine--tRNA ligase (476 aa).

Residue cysteine 27 participates in Zn(2+) binding. The 'HIGH' region signature appears at 29–39 (PTTYNYIHLGN). Residues cysteine 207, histidine 232, and glutamate 236 each contribute to the Zn(2+) site. The 'KMSKS' region motif lies at 264–268 (KMSKS). Lysine 267 serves as a coordination point for ATP.

This sequence belongs to the class-I aminoacyl-tRNA synthetase family. Monomer. The cofactor is Zn(2+).

It is found in the cytoplasm. The catalysed reaction is tRNA(Cys) + L-cysteine + ATP = L-cysteinyl-tRNA(Cys) + AMP + diphosphate. This chain is Cysteine--tRNA ligase, found in Moorella thermoacetica (strain ATCC 39073 / JCM 9320).